We begin with the raw amino-acid sequence, 205 residues long: uncharacterized protein (205 aa).

5 consecutive transmembrane segments (helical) span residues 4-24, 105-125, 130-150, 151-171, and 182-202; these read LAFL…AIDD, KWFI…LWIL, FLLF…KIPN, WLFN…VPEC, and ITIP…KFII.

Its subcellular location is the cell membrane. This is an uncharacterized protein from Methanocaldococcus jannaschii (strain ATCC 43067 / DSM 2661 / JAL-1 / JCM 10045 / NBRC 100440) (Methanococcus jannaschii).